The sequence spans 316 residues: Porphobilinogen deaminase (316 aa).

Position 245 is an S-(dipyrrolylmethanemethyl)cysteine (Cys-245).

Belongs to the HMBS family. In terms of assembly, monomer. Dipyrromethane serves as cofactor.

It catalyses the reaction 4 porphobilinogen + H2O = hydroxymethylbilane + 4 NH4(+). It participates in porphyrin-containing compound metabolism; protoporphyrin-IX biosynthesis; coproporphyrinogen-III from 5-aminolevulinate: step 2/4. Its pathway is porphyrin-containing compound metabolism; chlorophyll biosynthesis. Tetrapolymerization of the monopyrrole PBG into the hydroxymethylbilane pre-uroporphyrinogen in several discrete steps. This is Porphobilinogen deaminase from Prochlorococcus marinus (strain MIT 9312).